The following is a 254-amino-acid chain: Phosphoglycerate mutase 1 (254 aa).

Substrate contacts are provided by residues 10 to 17 (RHGESAWN) and 23 to 24 (SG). Catalysis depends on His-11, which acts as the Tele-phosphohistidine intermediate. Phosphoserine is present on residues Ser-14 and Ser-23. Tyr-26 carries the post-translational modification Phosphotyrosine. At Ser-31 the chain carries Phosphoserine. Residues Arg-62, 89–92 (ERHY), and Lys-100 contribute to the substrate site. Glu-89 serves as the catalytic Proton donor/acceptor. At Lys-106 the chain carries N6-acetyllysine. Position 116–117 (116–117 (RR)) interacts with substrate. The residue at position 118 (Ser-118) is a Phosphoserine. 187–188 (GN) lines the substrate pocket. Lys-251 carries the N6-acetyllysine; alternate modification. An N6-succinyllysine; alternate modification is found at Lys-251. An N6-acetyllysine mark is found at Lys-253 and Lys-254.

The protein belongs to the phosphoglycerate mutase family. BPG-dependent PGAM subfamily. Homodimer. In terms of processing, acetylated at Lys-253, Lys-253 and Lys-254 under high glucose condition. Acetylation increases catalytic activity. Under glucose restriction SIRT1 levels dramatically increase and it deacetylates the enzyme.

The enzyme catalyses (2R)-2-phosphoglycerate = (2R)-3-phosphoglycerate. It carries out the reaction (2R)-3-phospho-glyceroyl phosphate = (2R)-2,3-bisphosphoglycerate + H(+). Its function is as follows. Catalyzes the interconversion of 2-phosphoglycerate and 3-phosphoglyceratea crucial step in glycolysis, by using 2,3-bisphosphoglycerate. Also catalyzes the interconversion of (2R)-2,3-bisphosphoglycerate and (2R)-3-phospho-glyceroyl phosphate. This is Phosphoglycerate mutase 1 from Pongo abelii (Sumatran orangutan).